We begin with the raw amino-acid sequence, 657 residues long: Serine/threonine kinase NLK (657 aa).

Residues Ser208–Leu554 form the Protein kinase domain. Residues Ile214–Val222 and Lys237 each bind ATP. Asp391 serves as the catalytic Proton acceptor.

It belongs to the protein kinase superfamily. Ser/Thr protein kinase family. Component of the beta-catenin-lit-1 complex (also called the lit-1/wrm-1 complex or the wrm-1/lit-1 kinase complex) at least composed of lit-1 and wrm-1. Interacts with wrm-1 (via N-terminus); the interaction is direct and activates lit-1 kinase activity which leads to the phosphorylation of pop-1. This promotes pop-1 interaction with par-5 and translocation of pop-1 from the nucleus to the cytoplasm. Interacts with pop-1 (when phosphorylated on 'Ser-125'); the interaction is dependent on the beta-catenin-lit-1 complex. Requires Mg(2+) as cofactor.

It localises to the cytoplasm. The protein resides in the cell cortex. The protein localises to the nucleus. It catalyses the reaction L-seryl-[protein] + ATP = O-phospho-L-seryl-[protein] + ADP + H(+). It carries out the reaction L-threonyl-[protein] + ATP = O-phospho-L-threonyl-[protein] + ADP + H(+). Its function is as follows. Has a role in the Wnt signaling pathway controlling the asymmetry of cell divisions during embryogenesis. Operates in the AB and EMS cell lineages influencing cell specification. Required for body wall muscle development, endoderm development, pop-1 asymmetry and T-cell division asymmetry. Component of the beta-catenin-lit-1 complex which promotes the phosphorylation, down-regulation and subcellular relocation of pop-1. Regulates plp-1 nuclear localization in embryos. Plays a role in male tail tip morphogenesis. In Caenorhabditis briggsae, this protein is Serine/threonine kinase NLK.